The sequence spans 481 residues: Aspartyl/glutamyl-tRNA(Asn/Gln) amidotransferase subunit B (481 aa).

This sequence belongs to the GatB/GatE family. GatB subfamily. As to quaternary structure, heterotrimer of A, B and C subunits.

It carries out the reaction L-glutamyl-tRNA(Gln) + L-glutamine + ATP + H2O = L-glutaminyl-tRNA(Gln) + L-glutamate + ADP + phosphate + H(+). The enzyme catalyses L-aspartyl-tRNA(Asn) + L-glutamine + ATP + H2O = L-asparaginyl-tRNA(Asn) + L-glutamate + ADP + phosphate + 2 H(+). Allows the formation of correctly charged Asn-tRNA(Asn) or Gln-tRNA(Gln) through the transamidation of misacylated Asp-tRNA(Asn) or Glu-tRNA(Gln) in organisms which lack either or both of asparaginyl-tRNA or glutaminyl-tRNA synthetases. The reaction takes place in the presence of glutamine and ATP through an activated phospho-Asp-tRNA(Asn) or phospho-Glu-tRNA(Gln). This chain is Aspartyl/glutamyl-tRNA(Asn/Gln) amidotransferase subunit B, found in Pseudomonas fluorescens (strain SBW25).